Here is a 120-residue protein sequence, read N- to C-terminus: Large ribosomal subunit protein bL17 (120 aa).

This sequence belongs to the bacterial ribosomal protein bL17 family. In terms of assembly, part of the 50S ribosomal subunit. Contacts protein L32.

The chain is Large ribosomal subunit protein bL17 from Mesomycoplasma hyopneumoniae (strain J / ATCC 25934 / NCTC 10110) (Mycoplasma hyopneumoniae).